The chain runs to 797 residues: MAP/microtubule affinity-regulating kinase 3 (797 aa).

The tract at residues 1–35 is disordered; sequence MSTRTPLPTVNERDTENHISHGDGRQEVTSRTGRS. A compositionally biased stretch (basic and acidic residues) spans 11–28; it reads NERDTENHISHGDGRQEV. Phosphoserine is present on Ser-42. The Protein kinase domain maps to 56-307; it reads YRLLKTIGKG…LEQIMKDRWI (252 aa). ATP contacts are provided by residues 62 to 70 and Lys-85; that span reads IGKGNFAKV. Catalysis depends on Asp-178, which acts as the Proton acceptor. Thr-211 is subject to Phosphothreonine; by LKB1. The 40-residue stretch at 326 to 365 folds into the UBA domain; the sequence is ISDQKRIDIMVGMGYSQEEIQESLSKMKYDEITATYLLLG. A phosphoserine mark is found at Ser-368, Ser-374, Ser-376, Ser-380, Ser-383, Ser-400, Ser-419, and Ser-469. Disordered regions lie at residues 372 to 504 and 585 to 701; these read DASD…GMTR and PDQR…KPRS. A compositionally biased stretch (low complexity) spans 374–385; that stretch reads SDSSSSSNLSLA. The segment covering 391–400 has biased composition (polar residues); it reads SDLSNSTGQS. Composition is skewed to polar residues over residues 492 to 504 and 585 to 602; these read VPSSNAASGGMTR and PDQRTPVASTHSISSATT. Phosphoserine is present on residues Ser-593 and Ser-596. At Thr-602 the chain carries Phosphothreonine. Phosphothreonine; by PKC/PRKCZ is present on Thr-617. Residues Ser-636, Ser-651, and Ser-654 each carry the phosphoserine modification. Residues 637-664 show a composition bias toward polar residues; sequence PSLSHEATPLSQTRSRGSTNLFSKLTSK. Over residues 669–678 the composition is skewed to basic and acidic residues; sequence LPTEYERNGR. Ser-687 carries the post-translational modification Phosphoserine. Residues 689–699 show a composition bias toward basic and acidic residues; it reads EQKDENREAKP. Positions 748-797 constitute a KA1 domain; sequence DGHAESLVQWEMEVCKLPRLSLNGVRFKRISGTSIAFKNIASKIANELKL.

This sequence belongs to the protein kinase superfamily. CAMK Ser/Thr protein kinase family. SNF1 subfamily. As to quaternary structure, interacts with MAPT/TAU. Interacts with DLG5 (via coiled-coil domain). Interacts with STK3/MST2 and STK4/MST1 in the presence of DLG5. Interacts with YWHAB, YWHAG, YWHAQ and YWHAZ. Interacts with PKP2 (via N-terminus). Interacts with CDC25C. Interacts with KSR1. Phosphorylated at Thr-211 by STK11/LKB1 in complex with STE20-related adapter-alpha (STRADA) pseudo kinase and CAB39. Phosphorylation at Thr-617 by PRKCZ/aPKC inhibits the kinase activity.

It localises to the cell membrane. Its subcellular location is the cell projection. The protein localises to the dendrite. The protein resides in the cytoplasm. The catalysed reaction is L-seryl-[protein] + ATP = O-phospho-L-seryl-[protein] + ADP + H(+). It carries out the reaction L-threonyl-[protein] + ATP = O-phospho-L-threonyl-[protein] + ADP + H(+). Its activity is regulated as follows. Activated by phosphorylation on Thr-211. Inhibited by phosphorylation on Thr-617. Its function is as follows. Serine/threonine-protein kinase. Involved in the specific phosphorylation of microtubule-associated proteins for MAP2 and MAP4. Phosphorylates the microtubule-associated protein MAPT/TAU. Phosphorylates CDC25C on 'Ser-216'. Regulates localization and activity of some histone deacetylases by mediating phosphorylation of HDAC7, promoting subsequent interaction between HDAC7 and 14-3-3 and export from the nucleus. Regulates localization and activity of MITF by mediating its phosphorylation, promoting subsequent interaction between MITF and 14-3-3 and retention in the cytosol. Negatively regulates the Hippo signaling pathway and antagonizes the phosphorylation of LATS1. Cooperates with DLG5 to inhibit the kinase activity of STK3/MST2 toward LATS1. Phosphorylates PKP2 and KSR1. The polypeptide is MAP/microtubule affinity-regulating kinase 3 (Mark3) (Rattus norvegicus (Rat)).